A 157-amino-acid chain; its full sequence is 3-dehydroquinate dehydratase (157 aa).

Residue Y24 is the Proton acceptor of the active site. Substrate-binding residues include N75, H81, and D88. H101 functions as the Proton donor in the catalytic mechanism. Residues 102–103 and R112 each bind substrate; that span reads LS.

The protein belongs to the type-II 3-dehydroquinase family. In terms of assembly, homododecamer.

It carries out the reaction 3-dehydroquinate = 3-dehydroshikimate + H2O. It functions in the pathway metabolic intermediate biosynthesis; chorismate biosynthesis; chorismate from D-erythrose 4-phosphate and phosphoenolpyruvate: step 3/7. Catalyzes a trans-dehydration via an enolate intermediate. In Brucella abortus (strain S19), this protein is 3-dehydroquinate dehydratase.